Reading from the N-terminus, the 1074-residue chain is MARQDRLRELLGPLHPYKSDDEEEDCAQEEEGEQEEEFVDAEELCSGGIKAGSLPGRARVSIPDEYTKEKCTVYGRFPLKGPWWRVKVQVLKPQRSRSYQVQGFPAYFLQVDMSPPDQKQICSLFLKECNLASERIQEFLKWVEKVSSFENLHFENLWETLRLFYRETEKKDKKLSTPREQQGEEMRVEKSFAFISAMVALQFPKVMEFLPSLFPRHFKRLISSSSDWVLGCIEDVLGTQPWKLGFRRITYREMKLVRCEASWTAFSQCPSLLQLMTPLQKNALVIYSKLRQTCREDGHTYIEVKDLTSGLSEHMSFEEACQSLAFLKDIDVVIYEKDYVFLSELYEAEQDIASSICELMSRPPWHLKVDVKNVLASIRGAKPNDPGSAEAVEGSKPEEVGSEQGDSVLDAQDGDDHVRSNGEHVANAEINDVPLDQDQVVALETICANAVTVLSGKGGCGKTTIVSRLFKHMEHLEETEVQQACEDFEQDQEASEEWLDCPKQSPAGVDKAVEVLLTAPTGKAAGLLRQRTDLPAYTLCQVNYSFYMWKTKNEVDKPWKFSTVRVLVVDEGSLVSVGIFKSVLQLLCKHSKLSKLIILGDVRQLPSIEPGNMLQDVFETLKSRQCAIELKTNHRTESQLIVDNATRISRRQFPKFDAELNICGNPTLPLSIQDKTFIFVRLPEEDSRSQSSKGEHRSNLYTAVKTLLQGKDFCSFESSKTSQFIAFRRQDCDLINDCCCKHYTGHLIKDHEKKLIFAVGDKICCTRNAYLSDLLPDKDQEAEGKGYGDAPDDDAKIKQDFESSTRLCNGEIFFITRDVTDVTFKRKRLLTINNEAGLEVTVDFSKLMANCQIKHAWARTIHTFQGSEENTVVYVVGKAGRQHWQHVYTAVTRGRSRVYIIAQESELRSATRKRGFPRQTRLKHFLQKKLSGSCAPSTGFASQPSSPRVGGRPDTQPPASHLCRTPDNKATADSARGDERWLSASVNDDVDTDEESAQLRGSKRIGDGFPFDEESPSKFRMVEAPSPQVSSVFQNMRLNTLTPRQLFKPTDNQDTGTAGVADDANDPSNQEMEM.

Disordered regions lie at residues Met-1–Phe-38, Gly-380–Ser-420, and Gly-932–Glu-1014. A compositionally biased stretch (acidic residues) spans Asp-20 to Phe-38. Polar residues predominate over residues Cys-934–Ser-946. 2 positions are modified to phosphoserine: Ser-942 and Ser-946. At Thr-992 the chain carries Phosphothreonine. Residues Ser-1015 and Ser-1026 each carry the phosphoserine modification. Residues Val-1022–Leu-1046 carry the Nuclear export signal motif. Residues Thr-1040 to Met-1074 are disordered.

It belongs to the RecD family. HELB subfamily. As to quaternary structure, binds to RPA1; this interaction promotes HELB recruitment to chromatin following DNA damage. Interacts with at least two subunits of the DNA polymerase alpha complex. Interacts with CDC45. Interacts with TOPB1. Post-translationally, phosphorylated at Ser-942 by CDK2 during the G1/S transition, resulting in its nuclear export into the cytoplasm. As S phase progresses, its exclusion from the nucleus promotes the activation of long-range resection.

Its subcellular location is the nucleus. The protein localises to the cytoplasm. It localises to the chromosome. It catalyses the reaction ATP + H2O = ADP + phosphate + H(+). In terms of biological role, 5'-3' DNA helicase involved in DNA damage response by acting as an inhibitor of DNA end resection. Recruitment to single-stranded DNA (ssDNA) following DNA damage leads to inhibit the nucleases catalyzing resection, such as EXO1, BLM and DNA2, possibly via the 5'-3' ssDNA translocase activity of HELB. As cells approach S phase, DNA end resection is promoted by the nuclear export of HELB following phosphorylation. Acts independently of TP53BP1. Unwinds duplex DNA with 5'-3' polarity. Has single-strand DNA-dependent ATPase and DNA helicase activities. Prefers ATP and dATP as substrates. During S phase, may facilitate cellular recovery from replication stress. The polypeptide is DNA helicase B (Mus musculus (Mouse)).